The following is a 211-amino-acid chain: Shikimate kinase (211 aa).

The interval 1 to 22 is disordered; sequence MHFRYNYRMQRSKTPNTKNSDT. The segment covering 12 to 22 has biased composition (polar residues); it reads SKTPNTKNSDT. 36-41 is a binding site for ATP; sequence GSGKTT. T40 contacts Mg(2+). The substrate site is built by D58, R82, and G104. R142 serves as a coordination point for ATP. R161 provides a ligand contact to substrate. Residue Q178 coordinates ATP.

Belongs to the shikimate kinase family. In terms of assembly, monomer. It depends on Mg(2+) as a cofactor.

Its subcellular location is the cytoplasm. The enzyme catalyses shikimate + ATP = 3-phosphoshikimate + ADP + H(+). It functions in the pathway metabolic intermediate biosynthesis; chorismate biosynthesis; chorismate from D-erythrose 4-phosphate and phosphoenolpyruvate: step 5/7. Functionally, catalyzes the specific phosphorylation of the 3-hydroxyl group of shikimic acid using ATP as a cosubstrate. The sequence is that of Shikimate kinase from Nitrosomonas europaea (strain ATCC 19718 / CIP 103999 / KCTC 2705 / NBRC 14298).